Here is a 470-residue protein sequence, read N- to C-terminus: Uronate isomerase (470 aa).

It belongs to the metallo-dependent hydrolases superfamily. Uronate isomerase family.

The catalysed reaction is D-glucuronate = D-fructuronate. The enzyme catalyses aldehydo-D-galacturonate = keto-D-tagaturonate. Its pathway is carbohydrate metabolism; pentose and glucuronate interconversion. This chain is Uronate isomerase, found in Salmonella heidelberg (strain SL476).